The sequence spans 39 residues: Photosystem II reaction center protein J (39 aa).

The helical transmembrane segment at 9 to 29 threads the bilayer; sequence LWLVATVGGIAAITVLGIFIY.

It belongs to the PsbJ family. In terms of assembly, PSII is composed of 1 copy each of membrane proteins PsbA, PsbB, PsbC, PsbD, PsbE, PsbF, PsbH, PsbI, PsbJ, PsbK, PsbL, PsbM, PsbT, PsbX, PsbY, PsbZ, Psb30/Ycf12, at least 3 peripheral proteins of the oxygen-evolving complex and a large number of cofactors. It forms dimeric complexes.

It localises to the plastid. The protein localises to the chloroplast thylakoid membrane. In terms of biological role, one of the components of the core complex of photosystem II (PSII). PSII is a light-driven water:plastoquinone oxidoreductase that uses light energy to abstract electrons from H(2)O, generating O(2) and a proton gradient subsequently used for ATP formation. It consists of a core antenna complex that captures photons, and an electron transfer chain that converts photonic excitation into a charge separation. The chain is Photosystem II reaction center protein J from Pyropia yezoensis (Susabi-nori).